The chain runs to 253 residues: 7-carboxy-7-deazaguanine synthase (253 aa).

Substrate-binding positions include 12-14 (WQG) and Arg32. The Radical SAM core domain maps to 23-253 (AFGRRQIFVR…FQVHKYLNVL (231 aa)). [4Fe-4S] cluster contacts are provided by Cys36, Cys40, and Cys43. A Mg(2+)-binding site is contributed by Ser45. Residue Thr98 participates in substrate binding. Gly100 is a binding site for S-adenosyl-L-methionine.

It belongs to the radical SAM superfamily. 7-carboxy-7-deazaguanine synthase family. In terms of assembly, homodimer. It depends on [4Fe-4S] cluster as a cofactor. The cofactor is S-adenosyl-L-methionine. Requires Mg(2+) as cofactor.

It catalyses the reaction 6-carboxy-5,6,7,8-tetrahydropterin + H(+) = 7-carboxy-7-deazaguanine + NH4(+). The protein operates within purine metabolism; 7-cyano-7-deazaguanine biosynthesis. Catalyzes the complex heterocyclic radical-mediated conversion of 6-carboxy-5,6,7,8-tetrahydropterin (CPH4) to 7-carboxy-7-deazaguanine (CDG), a step common to the biosynthetic pathways of all 7-deazapurine-containing compounds. The chain is 7-carboxy-7-deazaguanine synthase from Thermococcus kodakarensis (strain ATCC BAA-918 / JCM 12380 / KOD1) (Pyrococcus kodakaraensis (strain KOD1)).